Reading from the N-terminus, the 347-residue chain is 3-isopropylmalate dehydrogenase (347 aa).

Position 76–87 (76–87 (GPKWTDPNNRPE)) interacts with NAD(+). Residues R94, R104, R132, and D217 each contribute to the substrate site. 3 residues coordinate Mg(2+): D217, D241, and D245. 275–287 (GSAPDIANEDKAN) serves as a coordination point for NAD(+).

It belongs to the isocitrate and isopropylmalate dehydrogenases family. LeuB type 1 subfamily. In terms of assembly, homodimer. It depends on Mg(2+) as a cofactor. Requires Mn(2+) as cofactor.

It localises to the cytoplasm. The catalysed reaction is (2R,3S)-3-isopropylmalate + NAD(+) = 4-methyl-2-oxopentanoate + CO2 + NADH. Its pathway is amino-acid biosynthesis; L-leucine biosynthesis; L-leucine from 3-methyl-2-oxobutanoate: step 3/4. In terms of biological role, catalyzes the oxidation of 3-carboxy-2-hydroxy-4-methylpentanoate (3-isopropylmalate) to 3-carboxy-4-methyl-2-oxopentanoate. The product decarboxylates to 4-methyl-2 oxopentanoate. This Staphylococcus epidermidis (strain ATCC 35984 / DSM 28319 / BCRC 17069 / CCUG 31568 / BM 3577 / RP62A) protein is 3-isopropylmalate dehydrogenase.